The primary structure comprises 512 residues: MPKKNKPAAKGPFYFFMMEFKEQEEAAGYRFSGLAEVTEKAGPHWEKLAPHEREPYNQRAKQNKANPKEAGGYGERYTAQGKPFSQVQAEAAKRRQLEEQIQKRIVEMIQTASANNALGELEVYFVSCNYFCVSLSGEYVPAELAIIKYSLNDGVMDSLNVLINPTDLPLGMALDAKTHSSSTHQLPVPPDALGEANYEKILRQILKFFKNTSGSKVVPPIFTWNKDIPMVDSILRGILEATDLDYVKFSILPLIDFFYNLKLATEDYGLDIKTFPSIHLAKALLEKDVYAYTAGIACDVHEQLNNQVACALSRVVRWAYVISDSCCLDVGIEMEKGRHLPHNMTTLSDITGTVSALSSRMSKLTTTSDNNRSKMSRPRSTDRTDRDVTTTTIYSSRAGTVTGKPSTIVPQQPASSGGTRAANDTFNTTNPFYAMQMAQSANRSPTKKNPWSRENKLTEVRDPQSDTETSMLMLAPVAGRGRGTLARMNAAGRGRAQDLCTTVKTVGRGHLN.

Residues 9-75 (AKGPFYFFMM…NPKEAGGYGE (67 aa)) constitute a DNA-binding region (HMG box). Disordered regions lie at residues 49 to 72 (APHEREPYNQRAKQNKANPKEAGG), 360 to 421 (RMSK…GTRA), and 439 to 465 (QSANRSPTKKNPWSRENKLTEVRDPQS). Positions 360–370 (RMSKLTTTSDN) are enriched in polar residues. The span at 379-388 (RSTDRTDRDV) shows a compositional bias: basic and acidic residues. 2 stretches are compositionally biased toward polar residues: residues 393–421 (IYSSRAGTVTGKPSTIVPQQPASSGGTRA) and 439–449 (QSANRSPTKKN). Over residues 451 to 464 (WSRENKLTEVRDPQ) the composition is skewed to basic and acidic residues.

It belongs to the maelstrom family.

Its subcellular location is the cytoplasm. The protein resides in the nucleus. In terms of biological role, plays a central role during gametogenesis by repressing transposable elements and preventing their mobilization, which is essential for the germline integrity. Probably acts via the piRNA metabolic process, which mediates the repression of transposable elements during meiosis by forming complexes composed of piRNAs and Piwi proteins and governs the repression of transposons. This Culex quinquefasciatus (Southern house mosquito) protein is Protein maelstrom homolog (mael).